The chain runs to 254 residues: Small ribosomal subunit protein uS2 (254 aa).

Belongs to the universal ribosomal protein uS2 family.

This is Small ribosomal subunit protein uS2 from Legionella pneumophila (strain Lens).